The chain runs to 211 residues: Putative hydrolase SMU_367 (211 aa).

The signal sequence occupies residues 1–29; it reads MKKQFLEKAVFTVAATAATVVLGNKMADA. Positions 30-74 constitute a LysM domain; sequence DTYTLQEGDSFFSVAQRYHMDAYELASMNGKDITSLILPGQTLTV. Positions 77 to 101 are disordered; sequence SAAPDNQAAAPTDTTQATTETNDAN. The span at 78 to 101 shows a compositional bias: low complexity; that stretch reads AAPDNQAAAPTDTTQATTETNDAN. Residues 85-209 enclose the Peptidase C51 domain; the sequence is AAPTDTTQAT…GTPGSVSYIY (125 aa).

This is Putative hydrolase SMU_367 from Streptococcus mutans serotype c (strain ATCC 700610 / UA159).